We begin with the raw amino-acid sequence, 634 residues long: DNA gyrase subunit B (634 aa).

The Toprim domain maps to 416-530 (REIYIVEGDS…NGYIYIAMPP (115 aa)). Mg(2+) contacts are provided by Glu-422, Asp-495, and Asp-497.

It belongs to the type II topoisomerase GyrB family. As to quaternary structure, heterotetramer, composed of two GyrA and two GyrB chains. In the heterotetramer, GyrA contains the active site tyrosine that forms a transient covalent intermediate with DNA, while GyrB binds cofactors and catalyzes ATP hydrolysis. It depends on Mg(2+) as a cofactor. Mn(2+) serves as cofactor. The cofactor is Ca(2+).

The protein resides in the cytoplasm. The enzyme catalyses ATP-dependent breakage, passage and rejoining of double-stranded DNA.. In terms of biological role, a type II topoisomerase that negatively supercoils closed circular double-stranded (ds) DNA in an ATP-dependent manner to modulate DNA topology and maintain chromosomes in an underwound state. Negative supercoiling favors strand separation, and DNA replication, transcription, recombination and repair, all of which involve strand separation. Also able to catalyze the interconversion of other topological isomers of dsDNA rings, including catenanes and knotted rings. Type II topoisomerases break and join 2 DNA strands simultaneously in an ATP-dependent manner. The protein is DNA gyrase subunit B of Borreliella burgdorferi (strain ATCC 35210 / DSM 4680 / CIP 102532 / B31) (Borrelia burgdorferi).